Consider the following 180-residue polypeptide: Inner membrane-spanning protein YciB (180 aa).

Helical transmembrane passes span 4-24 (LLSE…GGGI), 25-45 (QSAT…CYII), 49-69 (VSKL…ITLI), 76-96 (IKIK…MSGI), 118-138 (IILS…NEVV), and 150-170 (FKVF…LPLL).

This sequence belongs to the YciB family.

Its subcellular location is the cell inner membrane. Functionally, plays a role in cell envelope biogenesis, maintenance of cell envelope integrity and membrane homeostasis. This chain is Inner membrane-spanning protein YciB, found in Rickettsia typhi (strain ATCC VR-144 / Wilmington).